The following is a 239-amino-acid chain: Probable transcriptional regulatory protein Pnuc_0618 (239 aa).

The interval 1 to 21 (MAGHSKWANIQHRKGRQDEKR) is disordered.

Belongs to the TACO1 family.

Its subcellular location is the cytoplasm. The chain is Probable transcriptional regulatory protein Pnuc_0618 from Polynucleobacter asymbioticus (strain DSM 18221 / CIP 109841 / QLW-P1DMWA-1) (Polynucleobacter necessarius subsp. asymbioticus).